We begin with the raw amino-acid sequence, 382 residues long: Fetuin-B (382 aa).

The first 15 residues, Met1 to Cys15, serve as a signal peptide directing secretion. 2 consecutive Cystatin fetuin-B-type domains span residues Ala25–Thr138 and Met149–Asp255. Residue Asn37 is glycosylated (N-linked (GlcNAc...) asparagine). 3 cysteine pairs are disulfide-bonded: Cys93–Cys104, Cys117–Cys137, and Cys151–Cys154. A glycan (N-linked (GlcNAc...) asparagine) is linked at Asn136. N-linked (GlcNAc...) asparagine glycosylation occurs at Asn182. Intrachain disulfides connect Cys216-Cys224 and Cys237-Cys254. Polar residues-rich tracts occupy residues Pro262–Thr276 and Gln286–Pro295. 2 disordered regions span residues Pro262–Pro320 and Ala363–Pro382. Thr289 and Thr292 each carry an O-linked (GalNAc...) threonine glycan. A compositionally biased stretch (basic and acidic residues) spans Leu310–Pro320. Ser315 is subject to Phosphoserine.

It belongs to the fetuin family. As to expression, liver and testis.

It localises to the secreted. Protease inhibitor required for egg fertilization. Required to prevent premature zona pellucida hardening before fertilization, probably by inhibiting the protease activity of ASTL, a protease that mediates the cleavage of ZP2 and triggers zona pellucida hardening. The protein is Fetuin-B (FETUB) of Homo sapiens (Human).